We begin with the raw amino-acid sequence, 735 residues long: Serine/threonine-protein kinase BRSK2 (735 aa).

Residues 20 to 271 enclose the Protein kinase domain; it reads YRLEKTLGKG…LEHIQKHIWY (252 aa). Residues 26–34 and Lys-49 contribute to the ATP site; that span reads LGKGQTGLV. Asp-142 serves as the catalytic Proton acceptor. Phosphothreonine; by LKB1 is present on Thr-175. Thr-261 is modified (phosphothreonine; by PKA). Phosphoserine is present on Ser-295. The region spanning 298–340 is the UBA domain; it reads DIDPDVLDSMHSLGCFRDRNKLLQDLLSEEENQEKMIYFLLLD. The span at 346–367 shows a compositional bias: basic and acidic residues; it reads PSHEDEDLPPRNEIDPPRKRVD. Disordered stretches follow at residues 346 to 476 and 492 to 516; these read PSHE…GVPW and RFHR…SSPE. Ser-368, Ser-383, Ser-394, Ser-413, Ser-424, and Ser-428 each carry phosphoserine. Over residues 411-429 the composition is skewed to low complexity; sequence SRSISGASSGLSTSPLSSP. Residues 432 to 446 show a composition bias toward pro residues; the sequence is TPHPSPRGSPLPTPK. Position 456 is a phosphoserine (Ser-456). Phosphothreonine is present on residues Thr-460, Thr-464, and Thr-510. A phosphoserine mark is found at Ser-513, Ser-514, and Ser-521. The KEN box motif lies at 604-606; that stretch reads KEN. Positions 682–735 are disordered; sequence KNGQAAQAPSTPAKRSAHGPLGDSAAAGPGGDTEYPMGKDMAKMGPPAARREQP.

This sequence belongs to the protein kinase superfamily. CAMK Ser/Thr protein kinase family. SNF1 subfamily. As to quaternary structure, interacts with FZR1, a regulatory subunit of the APC ubiquitin ligase complex. Interacts with COPS5. Interacts with PAK1. The cofactor is Mg(2+). In terms of processing, may be phosphorylated at Thr-261 by PKA. Phosphorylated at Thr-175 by STK11/LKB1 in complex with STE20-related adapter-alpha (STRADA) pseudo kinase and CAB39. Not phosphorylated at Thr-175 by CaMKK2. In contrast, it is phosphorylated and activated by CaMKK1. May be inactivated via dephosphorylation of Thr-175 by PP2C. Polyubiquitinated by the APC complex in conjunction with FZR1, leading to its proteasomal degradation. Targeted for proteasomal degradation by interaction with COPS5. BRSK2 levels change during the cell cycle. BRSK2 levels are low at the G1/S boundary and gradually increase as cells progress into G2 phase. BRSK2 levels decrease rapidly at the end of mitosis. Detected in pancreas islets and in brain (at protein level). Detected in brain and pancreas.

Its subcellular location is the cytoplasm. The protein resides in the cytoskeleton. The protein localises to the microtubule organizing center. It is found in the centrosome. It localises to the perinuclear region. Its subcellular location is the endoplasmic reticulum. It catalyses the reaction L-seryl-[protein] + ATP = O-phospho-L-seryl-[protein] + ADP + H(+). The catalysed reaction is L-threonyl-[protein] + ATP = O-phospho-L-threonyl-[protein] + ADP + H(+). The enzyme catalyses L-seryl-[tau protein] + ATP = O-phospho-L-seryl-[tau protein] + ADP + H(+). It carries out the reaction L-threonyl-[tau protein] + ATP = O-phospho-L-threonyl-[tau protein] + ADP + H(+). Its activity is regulated as follows. Activated by phosphorylation on Thr-175 by STK11/LKB1. Its function is as follows. Serine/threonine-protein kinase that plays a key role in polarization of neurons and axonogenesis, cell cycle progress and insulin secretion. Phosphorylates CDK16, CDC25C, MAPT/TAU, PAK1 and WEE1. Following phosphorylation and activation by STK11/LKB1, acts as a key regulator of polarization of cortical neurons, probably by mediating phosphorylation of microtubule-associated proteins such as MAPT/TAU at 'Thr-504' and 'Ser-554'. Also regulates neuron polarization by mediating phosphorylation of WEE1 at 'Ser-642' in post-mitotic neurons, leading to down-regulate WEE1 activity in polarized neurons. Plays a role in the regulation of the mitotic cell cycle progress and the onset of mitosis. Plays a role in the regulation of insulin secretion in response to elevated glucose levels, probably via phosphorylation of CDK16 and PAK1. While BRSK2 phosphorylated at Thr-175 can inhibit insulin secretion, BRSK2 phosphorylated at Thr-261 can promote insulin secretion. Regulates reorganization of the actin cytoskeleton. May play a role in the apoptotic response triggered by endoplasmic reticulum (ER) stress. This Mus musculus (Mouse) protein is Serine/threonine-protein kinase BRSK2 (Brsk2).